A 192-amino-acid polypeptide reads, in one-letter code: Cytidylate kinase (192 aa).

7 to 15 (GPPGAGKST) provides a ligand contact to ATP.

Belongs to the cytidylate kinase family. Type 2 subfamily.

The protein resides in the cytoplasm. It catalyses the reaction CMP + ATP = CDP + ADP. The catalysed reaction is dCMP + ATP = dCDP + ADP. In Haloquadratum walsbyi (strain DSM 16790 / HBSQ001), this protein is Cytidylate kinase.